We begin with the raw amino-acid sequence, 894 residues long: MFGALIKKIVGSKNERELRRLWPIVEQINHLEAEISSLSDDQLRNKTTEFKERYARGETLDSLLPEAFAVCREAGKRVLGMRHFDVQLIGGMVLHQGKIAEMKTGEGKTLVATLPSYLNALTGRGVHVITVNDYLARRDSEWMGRIHSFLGLSVGVIIHGLDDDERREAYNADITYGTNNEFGFDYLRDNMKFSLDDYVQRDFHYSIVDEVDSILIDEARTPLIISGPTEDSTDKYYIIDRIIPLLKKGEVLEEEANTLSGKRKRYTGDFTVDEKSKSATLTEEGVLKVEKLLKVDNLYDPRNMETLHHVNQALRAHALFKLDVDYVVKEGEVLIVDEFTGRLMPGRRWSDGLHQAIEAKEGVKIENENQTLATITFQNYFRMYEKLSGMTGTADTEAEEFHKIYKLDVVVIPTNRVLLRPDFPDVIYKTEGEKFNAVIEEIRELHAKGQPVLVGTISIEKSEVLSELLKRQGIPHNVLNAKQHEREAEIVAQGGRKGMITIATNMAGRGTDILLGGNADAMAKQWRRGNPEASDGEYERVLAQFKEQCANEHDEVVKLGGLHILGTERHESRRIDNQLRGRSGRQGDPGSSRFYLSLQDDLLRIFGSERVAKIMDMLKIEEGEAITHGLITKAIENAQRKVEAHNFEIRKHLIEYDDVMNKQREVIYAQRREILAGEGIRESFLDMVDETVADLAAGYAIDKVPAQEWDWQGMGDSIYKIFGFQVDIPAETMERLNPFNLRELLQEKVRELYTAKVAEFGDELMDHLIKVIMLQSIDTQWKDHLLSIDHLKEGIGLRGYGQKDPKQEYKKEAYQLFMDMMLRTREEVVEKIFWVQIAREEDVEKMEEQQKRQRLVFNLGDEPEAQQPVTSKKVGRNEPCPCGSGKKYKQCCGK.

Residues glutamine 87, 105–109 (GEGKT), and aspartate 512 contribute to the ATP site. The disordered stretch occupies residues 857 to 894 (FNLGDEPEAQQPVTSKKVGRNEPCPCGSGKKYKQCCGK). Positions 880, 882, 891, and 892 each coordinate Zn(2+).

This sequence belongs to the SecA family. In terms of assembly, monomer and homodimer. Part of the essential Sec protein translocation apparatus which comprises SecA, SecYEG and auxiliary proteins SecDF-YajC and YidC. It depends on Zn(2+) as a cofactor.

It is found in the cell inner membrane. The protein localises to the cytoplasm. It catalyses the reaction ATP + H2O + cellular proteinSide 1 = ADP + phosphate + cellular proteinSide 2.. Its function is as follows. Part of the Sec protein translocase complex. Interacts with the SecYEG preprotein conducting channel. Has a central role in coupling the hydrolysis of ATP to the transfer of proteins into and across the cell membrane, serving as an ATP-driven molecular motor driving the stepwise translocation of polypeptide chains across the membrane. The sequence is that of Protein translocase subunit SecA from Geotalea uraniireducens (strain Rf4) (Geobacter uraniireducens).